A 333-amino-acid polypeptide reads, in one-letter code: Nucleoid-associated protein VV1_3120 (333 aa).

Belongs to the YejK family.

The protein resides in the cytoplasm. The protein localises to the nucleoid. The protein is Nucleoid-associated protein VV1_3120 of Vibrio vulnificus (strain CMCP6).